Here is a 403-residue protein sequence, read N- to C-terminus: Phosphoglycerate kinase (403 aa).

Substrate-binding positions include 21–23 (DFN), R36, 59–62 (HLGR), R119, and R154. ATP is bound by residues K207, G299, E330, and 357 to 360 (GGDA).

The protein belongs to the phosphoglycerate kinase family. Monomer.

It is found in the cytoplasm. The enzyme catalyses (2R)-3-phosphoglycerate + ATP = (2R)-3-phospho-glyceroyl phosphate + ADP. It functions in the pathway carbohydrate degradation; glycolysis; pyruvate from D-glyceraldehyde 3-phosphate: step 2/5. The chain is Phosphoglycerate kinase from Chlamydia trachomatis serovar L2 (strain ATCC VR-902B / DSM 19102 / 434/Bu).